A 492-amino-acid chain; its full sequence is MDPYKHRPSSGSNSTFWTTNSGAPVWNNNSALTVGERGPILLEDYHLIEKLAQFDRERIPERVVHARGASAKGFFEVTHDISHLTCADFLRAPGVQTPVIVRFSTVVHERGSPETLRDPRGFAVKFYTREGNFDLVGNNMPVFFIRDGMKFPDMVHAFKPSPKTNMQENWRIVDFFSHHPESLHMFSFLFDDVGIPLNYRHMEGFGVNTYTLINKDGKPHLVKFHWKPTCGVKCLLDDEAVTVGGTCHSHATKDLTDSIAAGNYPEWKLYIQTIDPDHEDRFDFDPLDVTKTWPEDIIPLQPVGRMVLNKNIDNFFAENEQLAFCPAIIVPGIHYSDDKLLQTRIFSYADTQRHRLGPNYLMLPVNAPKCAYHNNHHDGSMNFMHRDEEVNYFPSRFDAARHAEKVPIPPRVLTGCREKCVIDKENNFQQAGERYRSFDPARQDRFLQRWVDALSDPRITHELRGIWISYWSQCDASLGQKLASRLNLKPNM.

The disordered stretch occupies residues 1 to 20 (MDPYKHRPSSGSNSTFWTTN). Polar residues predominate over residues 9–20 (SSGSNSTFWTTN). Arginine 62 is a heme binding site. Histidine 65 is an active-site residue. Heme is bound at residue arginine 102. Residue asparagine 138 is part of the active site. A heme-binding site is contributed by phenylalanine 151. Phosphotyrosine is present on tyrosine 210. Positions 325 to 348 (CPAIIVPGIHYSDDKLLQTRIFSY) form a cross-link, 3-(S-cysteinyl)-tyrosine (Cys-Tyr). The heme site is built by arginine 344, tyrosine 348, and arginine 355. The short motif at 484–492 (SRLNLKPNM) is the Peroxisome targeting signal element.

It belongs to the catalase family. As to quaternary structure, homotetramer. Interacts with GLO1 and GLO4; these interactions are disturbed by alpha-hydroxy-2-pyridinemethanesulfonic acid (HPMS) and salicylic acid (SA). Interacts with STRK1 at the plasma membrane. Requires heme as cofactor. Predominantly expressed in roots and, at low levels, in leaves (e.g. sheaths). Detected in seeds. Also present in panicles and culms. Observed in stems and anthers.

The protein localises to the peroxisome. Its subcellular location is the glyoxysome. The protein resides in the cell membrane. It carries out the reaction 2 H2O2 = O2 + 2 H2O. Strongly inhibited by beta-mercaptoethanol, sodium azide and potassium cyanide. Slightly repressed by 3-amino-1,2,4-triazole (3-AT). Activity is repressed proportionally to increased concentration of NaCl, KCl, LiCl and MgCl(2). Occurs in almost all aerobically respiring organisms and serves to protect cells from the toxic effects of hydrogen peroxide. May prevent the excessive accumulation of H(2)O(2) during water stress in response to the accumulation of abscisic acid (ABA). Involved in the modulation of ROS levels related to root growth regulation. Required for pollen viability and floret fertility upon heat stress (HS) by detoxifying reactive oxygen species (ROS) and malondialdehyde (MDA) accumulation in developing anthers exposed to HS. This Oryza sativa subsp. japonica (Rice) protein is Catalase isozyme B (CATB).